Reading from the N-terminus, the 29-residue chain is Vodo peptide N (29 aa).

Positions G1–N29 form a cross-link, cyclopeptide (Gly-Asn). 3 cysteine pairs are disulfide-bonded: C5-C19, C9-C21, and C14-C26.

In terms of processing, this is a cyclic peptide.

Its function is as follows. Probably participates in a plant defense mechanism. The chain is Vodo peptide N from Viola odorata (Sweet violet).